Reading from the N-terminus, the 233-residue chain is Ribose-5-phosphate isomerase A (233 aa).

Substrate is bound by residues 28–31, 85–88, and 98–101; these read TGST, DGAD, and KGLG. Glu107 functions as the Proton acceptor in the catalytic mechanism. Lys125 contributes to the substrate binding site.

The protein belongs to the ribose 5-phosphate isomerase family. As to quaternary structure, homodimer.

The enzyme catalyses aldehydo-D-ribose 5-phosphate = D-ribulose 5-phosphate. It functions in the pathway carbohydrate degradation; pentose phosphate pathway; D-ribose 5-phosphate from D-ribulose 5-phosphate (non-oxidative stage): step 1/1. Functionally, catalyzes the reversible conversion of ribose-5-phosphate to ribulose 5-phosphate. The protein is Ribose-5-phosphate isomerase A of Roseiflexus sp. (strain RS-1).